The primary structure comprises 299 residues: Single myb histone 1 (299 aa).

Positions 1-61 constitute an HTH myb-type domain; sequence MGAPKQRWTP…KWRNLSVTAG (61 aa). Residues 28–57 constitute a DNA-binding region (H-T-H motif); sequence WRTILRDSDFSALLRLRSNVDLKDKWRNLS. An H15 domain is found at 124–192; the sequence is SVARLDDLIL…KVNQKYRIAP (69 aa). A coiled-coil region spans residues 238-279; the sequence is EEAAAFAAKAVAEAEVAIAEAEEAARVAEAAENDAEAAKAFL.

It belongs to the histone H1/H5 family. SMH subfamily. Forms a homodimer and heterodimers. As to expression, expressed in leaves.

The protein resides in the nucleus. It localises to the chromosome. The protein localises to the nucleolus. It is found in the telomere. Functionally, binds preferentially double-stranded telomeric repeats 5'-TTTAGGG-3', but can also bind to the single G-rich and C-rich telomeric strand. This is Single myb histone 1 (SMH1) from Zea mays (Maize).